The primary structure comprises 358 residues: Endo-1,4-beta-xylanase B (358 aa).

The signal sequence occupies residues 1–17 (MRFSASLLLALTGSAAA). The region spanning 40–352 (QGLDAAMKAA…KAAYNAFLRG (313 aa)) is the GH10 domain. N-linked (GlcNAc...) asparagine glycosylation is present at Asn-136. The active-site Proton donor is Glu-166. The active-site Nucleophile is the Glu-274.

It belongs to the glycosyl hydrolase 10 (cellulase F) family.

Its subcellular location is the secreted. The catalysed reaction is Endohydrolysis of (1-&gt;4)-beta-D-xylosidic linkages in xylans.. Its pathway is glycan degradation; xylan degradation. Its activity is regulated as follows. Partial inhibition of activity is detected in the presence of Ag(+), Cu2(+) and SDS. Like most fungal xylanases, activity is completely inhibited by Hg(2+) since Hg(2+) could interact with tryptophan residues and oxidize the indole ring. Beta-mercaptoethanol enhances the enzymatic activity by counteracting the oxidation effects of the S-S linkage between cysteine residues. Functionally, endo-1,4-beta-xylanase involved in the hydrolysis of xylan, a major structural heterogeneous polysaccharide found in plant biomass representing the second most abundant polysaccharide in the biosphere, after cellulose. Is more active on soluble wheat arabinoxylan (defined as 100%) than on birchwood xylan (75.4%) and beechwood xylan (70.8%), and less active on insoluble wheat arabinoxylan (17.4%). Xylose is the major hydrolysis product of XynB. This Humicola insolens (Soft-rot fungus) protein is Endo-1,4-beta-xylanase B.